The sequence spans 3289 residues: MHQPPVRFTYRLLSYLISTIIAGQPLLPAVGAVITPQNGAGMDKAANGVPVVNIATPDGAGISHNRFTDYNVGKEGLILNNATGKLNPTQLGGLIQNNPNLKAGGEAKGIINEVTGGNRSLLQGYTEVAGKAANVMVANPYGITCDGCGFINTPHATLTTGRPVMNADGSLQALEVTEGSITINGAGLDGTRSDAVSIIARATEVNAALHAKDLTVTAGANRITADGRVSALKGEGDVPKVAVDTGALGGMYARRIHLTSTESGVGVNLGNLYARDGDITLDASGRLTVNNSLATGAVTAKGQGVTLTGDHKAGGNLSVSSRSDIVLSNGTLNSDKDLSLTAGGRITQQNEKLTAGRDVTLAAKNITQDTASQINAARDIVTVSSDTLTTQGQITAGQNLTASATTLTQDGTLLAKGHAGLDAGTLNNSGAVQGASLTLGSTTLSNSGSLLSGGPLTVNTRDFTQSGRTGAKGKVDITASGKLTSTGSLVSDDVLVLKAQDVTQNGVLSGGKGLTVSAQALSSGKKSVTHSDAAMTLNVTTVALDGENSAGDTLRVQADKLSTAAGAQLQSGKNLSINARDARLAGTQAAQQTMAVNASEKLTHSGKSSAPSLSLSAPELTSSGVLVGSALNTQSQTLTNSGLLQGEASLTVNTQRLDNQQNGTLYSAADLTLDIPDIRNSGLITGDNGLTLNTASLSNPGKIIADTLNVRATTLDGDGLLQGAGALALAGDTLSQGRNGRWLTAGDLSLRGKTLHTAGTTQGQNLTVQADNWANSGSVLATGNLTASATGQLTSTGDIMSQGDTTLNAATTDNRGSLLSAGTLSLDGNSLDNRGTVQGNHVTIRQNSVTNSGTLTGIAALTLAARMDMASPQPALMNNGGSLLTSGDLTITAGSITSSGHWQGKQVLITADSLANSGAIQAADSLTARLTGELVSTAGSKVTSNGEMALSALNLSNSGQWIAKNLTLKANSLTSAGDITGVDALTLTVNQTLNNHASGKLLSAGVLTLKADSVKNDGQLQGNATTITAGQLTNGGHLQGETLTLTASGGVNNRSGGVLMSRNALNVSTATLSNQGTIQGGGGVSLNATDRLQNDGKILSGSNLTLTAQVLANTGSGLVQAATLLLDVVNTVNGGRVLATGSADVKGTTLNNTGTLQGADLLVNYHTFSNSGTLLGTSGLGVKGSSLLQNGTGRLYSAGNLLLDAQDFSGQGQVVATGDVTLKLIAALTNHGTLAAGKTLSVTSQNAITNGGVMQGDAMVLGAGEAFTNNGMLTAGKGNSVFSAQRLFLNAPGSLQAGGDVSLNSRSDITISGFTGTAGSLTMNVAGTLLNSALIYAGNNLKLFTDRLHNQHGDILAGNSLWVQKDASGGANTEIINTSGNIETHQGDIVVRTGHLLNQREGFSATTTTRTNPSSIQGMGNALVDIPLSLLPDGSYGYFTREVENQHGTPCNGHGACNITMDTLYYYAPFADSATQRFLSSQNITTVTGADNPAGRIASGRNLSAEAERLENRASFILANGDIALSGRELSNQSWQTGTENEYLVYRYDPKTFYGSYATGSLDKLPLLSPEFENNTIRFSLDGREKDYTPGKTYYSVIQAGGDVKTRFTSSINNGTTTAHAGSVSPVVSAPVLNTLSQQTGGDSLTQTALQQYEPVVVGSPQWHDELAGALKNIAGGSPLTGQTGISDDWPLPSGNNGYLVPSTDPDSPYLITVNPKLDGLGQVDSHLFAGLYELLGAKPGQAPRETAPSYTDEKQFLGSSYFLDRLGLKPEKDYRFLGDAVFDTRYVSNAVLSRTGSRYLNGLGSDTEQMRYLMDNAARQQKGLGLEFGVALTAEQIAQLDGSILWWESATINGQTVMVPKLYLSPEDITLHNGSVISGNNVQLAGGNITNSGGSINAQNGLSLDSTGYIDNLNAGLISAGGSLDLSAIGDISNISSVISGKTVQLESVSGNISNITRRQQWNAGSDSRYGGVHLSGTDTGPVATIKGTDSLSLDAGKNIDITGATVSSGGTLGMSAGNDINIAANLISGSKSQSGFWHTDDNSASSTTSQGSSISAGGNLAMAAGHNLDVTASSVSAGHSALLSAGNDLSLNAVRESKNSRNGRSESHESHAAVSTVTAGDNLLLVAGRDVASQAAGVAAENNVVIRGGRDVNLVAESAGAGDSYTSKKKKEINETVRQQGTEIASGGDTTVNAGRDITAVASSVTATGNISVNAGRDVALTTATESDYHYLETKKKSGGFLSKKTTHTISEDSASREAGSLLSGNRVTVNAGDNLTVEGSDVVADQDVSLAAGNHVDVLAATSTDTSWRFKETKKSGLMGTGGIGFTIGSSKTTHDRREAGTTQSQSASTIGSTAGNVSITAGKQAHISGSDVIANRDISITGDSVVVDPGHDRRTVDEKFEQKKSGLTVALSGTVGSAINNAVTSAQETKESSDSRLKALQATKTALSGVQAGQAAAMATATGDPNATGVSLSLTTQKSKSQQHSESDTVSGSTLNAGNNLSVVATGKNRGDNRGDIVIAGSQLKAGGNTSLDAANDVLLSGAANTQKTTGRNSSSGGGVGVSIGAGGNGAGISVFASVNAAKGSEKGNGTEWTETTIDSGKTVTINSGRDTVLNGAQVNGNRIIADVGHDLLISSQQDTSKYDSKQTSVAAGGSFTFGSMTGSGYIAASRDKMKSRFDSVAEQTGMFSGDGGFDITVGNHTQLDGAVIASTATADKNSLDTGTLGFSDIHNEADYKVSHSGISLSGGGSFGDKFQGNMPGGMISAGGHSGHAEGTTQAAVADGTITIRDRDNQKQNLANLSRDPAHANDSISPIFDKEKEQRRLQTVGLISDIGSQVADIARTQGELNALKAAQDKYGPVPADATEEQRQAYLAKLRDTPEYKKEQEKYGTGSEIQRGIQAATAALQGLAGGNLAGALAGASAPELAHLLKSTEKDPAVNAIAHAILGGTVAAMQGNNVAAGAAGAATGELAARAIAGMLYPGVKQSDLSEEQKQTISTLATVSAGLAGGLTGNSTASAAVGAQSGKNAVENNYLSVSEKTELEIAKQTLKNSKDPAEREKAQQKYDALLEKDIASDKEVIAACSNGNASSSACASARLKVIASKEGYEDGPYNSKYSQQYADAYGQIVNLLDITSVDAQNQQQVKNAMINYFMVTKGVDRQTAESYTETTQGLEIIAASVTPLIGQAASNKLSYLGIGKKISFDGDFYTVDGMKFSKSYYEKLWEQGRPAPFVQAREVLNSNPKIEPDPRGAPGYLRYEGAGLEMIYNPKTGQVGHIQPVKVK.

Positions 1 to 32 are cleaved as a signal peptide; the sequence is MHQPPVRFTYRLLSYLISTIIAGQPLLPAVGA. Residues 36-322 are two-partner system transport domain (TPS); sequence PQNGAGMDKA…AGGNLSVSSR (287 aa). Positions 351-1398 are FHA-1; the sequence is EKLTAGRDVT…IVVRTGHLLN (1048 aa). Residues 595-615 form a disordered region; that stretch reads AVNASEKLTHSGKSSAPSLSL. Residues 1399–1689 are receptor binding domain (RBD); the sequence is QREGFSATTT…LTGQTGISDD (291 aa). Positions 1690–1874 are YP domain; the sequence is WPLPSGNNGY…LSPEDITLHN (185 aa). A periplasmic FHA-1 repeat (pFR) region spans residues 1875–1935; that stretch reads GSVISGNNVQ…DLSAIGDISN (61 aa). The segment at 1979–2653 is FHA-2; it reads TDTGPVATIK…TSKYDSKQTS (675 aa). Residues 2097–2113 are compositionally biased toward basic and acidic residues; it reads RESKNSRNGRSESHESH. 3 disordered regions span residues 2097 to 2116, 2332 to 2356, and 2466 to 2513; these read RESK…HAAV, GSSK…TIGS, and TGDP…TGKN. 2 stretches are compositionally biased toward polar residues: residues 2344–2356 and 2472–2507; these read GTTQ…TIGS and TGVS…NLSV. The interval 2992-3034 is pretoxin (PT) domain; that stretch reads SDLSEEQKQTISTLATVSAGLAGGLTGNSTASAAVGAQSGKNA. The VENN CT cleavage motif motif lies at 3035–3038; sequence VENN. A C-terminal effector domain (CT); has tRNase activity region spans residues 3035 to 3289; sequence VENNYLSVSE…VGHIQPVKVK (255 aa). The tract at residues 3039 to 3197 is inner membrane translocation domain (IMTD), targets protein to PtsG; that stretch reads YLSVSEKTEL…PLIGQAASNK (159 aa).

This sequence in the N-terminal section; belongs to the CdiA toxin family. In terms of assembly, forms a contact-dependent growth inhibition complex of CdiA-CT-NC101, CdiI-NC101 and EF-Tu; the complex is a dimer of heterotrimers. Stable CdiA-CT-NC101, EF-Tu complexes are not detected, nor are complexes with EF-Ts.

Its subcellular location is the secreted. The protein localises to the target cell. It localises to the target cell cytoplasm. In terms of biological role, toxic component of a toxin-immunity protein module, which functions as a cellular contact-dependent growth inhibition (CDI) system. CDI modules allow bacteria to communicate with and inhibit the growth of closely related neighboring bacteria in a contact-dependent fashion (target cell counts decrease about 10,0000-fold for this system). CdiA toxicity is neutralized by its cognate immunity protein CdiI-NC101, but not by CdiI from other bacteria. The C-terminal domain (CT) cleaves tRNA endonucleolytically at the 5' side of guanine discriminator nucleotide sites (removes the last 4 nucleotides of the tRNA acceptor arm when the first nucleotide to be removed is G). Requires EF-Ts (tsf) for toxic function of the CT domain in vivo. In vitro the CT tRNase activity requires both EF-Tu (tufA) and EF-Ts. EF-Ts probably increases steady-state GTP-EF-Tu-aa-tRNA substrate levels. The CT domain is thought to remodel this same complex to displace the 3'-end of the aa-tRNA and allow it to enter into the toxin active site. The CT domain gains access to the cytoplasm of target cells by using integral inner membrane protein PTS system glucose-specific EIICB component (ptsG). The CdiA protein is thought to be exported from the cell through the central lumen of CdiB, the other half of its two-partner system (TPS). The TPS domain probably remains associated with CdiB while the FHA-1 domain forms an extended filament with the receptor-binding domain (RBD) at its extremity; in the secretion arrested state the C-terminus of the RBD and YP domains form a hairpin-like structure as the FHA-2, PT and CT domains are periplasmic. The YP domain is probably responsible for this arrest at the point where it re-enters the host cell periplasm. Upon binding to a target cell outer membrane receptor a signal is transmitted to activate secretion. The filament elongates slightly, the rest of CdiA is secreted and the FHA-2 domain becomes stably associated with the target cell's outer membrane where it facilitates entry of the toxic CT domain into the target cell periplasm. From there the toxic CT domain is cleaved and gains access to the target cell cytoplasm via an inner membrane protein (PtsG for this CDI). This Escherichia coli (strain NC101) protein is tRNA nuclease CdiA.